The sequence spans 232 residues: 2,3-bisphosphoglycerate-dependent phosphoglycerate mutase (232 aa).

Substrate is bound by residues 10 to 17 (RHGESIWN), 23 to 24 (TG), Arg62, 89 to 92 (ERHY), Lys100, 116 to 117 (RR), and 185 to 186 (GN). His11 acts as the Tele-phosphohistidine intermediate in catalysis. Glu89 serves as the catalytic Proton donor/acceptor.

Belongs to the phosphoglycerate mutase family. BPG-dependent PGAM subfamily. As to quaternary structure, homodimer.

It catalyses the reaction (2R)-2-phosphoglycerate = (2R)-3-phosphoglycerate. It functions in the pathway carbohydrate degradation; glycolysis; pyruvate from D-glyceraldehyde 3-phosphate: step 3/5. In terms of biological role, catalyzes the interconversion of 2-phosphoglycerate and 3-phosphoglycerate. The sequence is that of 2,3-bisphosphoglycerate-dependent phosphoglycerate mutase from Buchnera aphidicola subsp. Baizongia pistaciae (strain Bp).